The sequence spans 1361 residues: Cell migration-inducing and hyaluronan-binding protein (1361 aa).

The N-terminal stretch at 1–30 is a signal peptide; it reads MGAAGRQDFLFKAMLTISWLTLTCFPGATS. Residues 44–166 enclose the G8 domain; the sequence is QPWNPGHDQD…KKLSWTFLNK (123 aa). N-linked (GlcNAc...) asparagine glycosylation is found at Asn-119, Asn-165, Asn-312, Asn-370, and Asn-420. Residues 176 to 317 form the GG-type lectin 1 domain; it reads GGYFFERSWG…GEYFNVSLSS (142 aa). The interval 295–591 is necessary for its endoplasmic reticulum (ER) retention and interaction with HSPA5; the sequence is AAARVFKLFQ…IHHTFSRCVT (297 aa). PbH1 repeat units follow at residues 572 to 594, 595 to 617, 719 to 741, and 798 to 819; these read DPPT…TVHG, SNGL…FTED, IPLG…IIDN, and GGDV…TLAS. 2 N-linked (GlcNAc...) asparagine glycosylation sites follow: Asn-889 and Asn-921. The region spanning 1227-1361 is the GG-type lectin 2 domain; it reads NDFAYIEVDG…PIPVVKKKKL (135 aa).

It belongs to the CEMIP family. Interacts with EPHA2 and ITPR3. Interacts with HSPA5/BIP; the interaction induces calcium leakage from the endoplasmic reticulum and cell migration. Interacts with clathrin heavy chain/CLTC. Post-translationally, N-glycosylated; glycosylation is not necessary for HA-binding. As to expression, expressed in dermal and in synovial fibroblasts. Strongly expressed in gastric cancers compared with the paired normal tissues. Strongly expressed in both ductal carcinoma and invasive breast cancer cells compared with benign epithelial cells (at protein level). Strongly expressed in brain, placenta, prostate, breast, lung and testis. Expressed in fibroblasts, epithelial cells and cancer cells. In ear, it is specifically expressed in inner ear. Expressed in cochlea and vestibule tissues. Strongly expressed in gastric cancers compared with the paired normal tissues. Strongly expressed in colon adenocarcinomas compared with normal colonic mucosas. Strongly expressed in breast cancer as compared to normal breast tissue.

The protein localises to the nucleus. The protein resides in the cytoplasm. Its subcellular location is the endoplasmic reticulum. It is found in the cell membrane. It localises to the membrane. The protein localises to the clathrin-coated pit. The protein resides in the secreted. The enzyme catalyses Random hydrolysis of (1-&gt;4)-linkages between N-acetyl-beta-D-glucosamine and D-glucuronate residues in hyaluronate.. Activity is up-regulated by histamine. Functionally, mediates depolymerization of hyaluronic acid (HA) via the cell membrane-associated clathrin-coated pit endocytic pathway. Binds to hyaluronic acid. Hydrolyzes high molecular weight hyaluronic acid to produce an intermediate-sized product, a process that may occur through rapid vesicle endocytosis and recycling without intracytoplasmic accumulation or digestion in lysosomes. Involved in hyaluronan catabolism in the dermis of the skin and arthritic synovium. Positively regulates epithelial-mesenchymal transition (EMT), and hence tumor cell growth, invasion and cancer dissemination. In collaboration with HSPA5/BIP, promotes cancer cell migration in a calcium and PKC-dependent manner. May be involved in hearing. The chain is Cell migration-inducing and hyaluronan-binding protein from Homo sapiens (Human).